The sequence spans 236 residues: UPF0257 lipoprotein YnfC (236 aa).

Positions M1–G16 are cleaved as a signal peptide. The N-palmitoyl cysteine moiety is linked to residue C17. Residue C17 is the site of S-diacylglycerol cysteine attachment.

Belongs to the UPF0257 family.

Its subcellular location is the cell membrane. The protein is UPF0257 lipoprotein YnfC of Salmonella schwarzengrund (strain CVM19633).